We begin with the raw amino-acid sequence, 99 residues long: Plastocyanin (99 aa).

The Plastocyanin-like domain occupies 1–99 (IEILLGGDDG…AGMVGKVTVN (99 aa)). The Cu cation site is built by H37, C84, H87, and M92.

The protein belongs to the plastocyanin family. Requires Cu(2+) as cofactor.

The protein resides in the plastid. Its subcellular location is the chloroplast thylakoid membrane. In terms of biological role, participates in electron transfer between P700 and the cytochrome b6-f complex in photosystem I. The polypeptide is Plastocyanin (PETE) (Cucumis sativus (Cucumber)).